Reading from the N-terminus, the 606-residue chain is Medium-chain acyl-CoA ligase ACSF2, mitochondrial (606 aa).

A mitochondrion-targeting transit peptide spans M1 to S13. Residues T256–K264, D484, R499, and K590 each bind ATP.

It belongs to the ATP-dependent AMP-binding enzyme family.

Its subcellular location is the mitochondrion. The catalysed reaction is a medium-chain fatty acid + ATP + CoA = a medium-chain fatty acyl-CoA + AMP + diphosphate. The enzyme catalyses octanoate + ATP + CoA = octanoyl-CoA + AMP + diphosphate. Its function is as follows. Acyl-CoA synthases catalyze the initial reaction in fatty acid metabolism, by forming a thioester with CoA. Has some preference toward medium-chain substrates. Plays a role in adipocyte differentiation. The chain is Medium-chain acyl-CoA ligase ACSF2, mitochondrial from Danio rerio (Zebrafish).